A 535-amino-acid polypeptide reads, in one-letter code: Glucan 1,6-alpha-glucosidase (535 aa).

Aspartate 194 acts as the Nucleophile in catalysis. Glutamate 236 functions as the Proton donor in the catalytic mechanism.

It belongs to the glycosyl hydrolase 13 family.

The protein localises to the cytoplasm. It catalyses the reaction Hydrolysis of (1-&gt;6)-alpha-D-glucosidic linkages in (1-&gt;6)-alpha-D-glucans and derived oligosaccharides.. In terms of biological role, the physiological substrates may be short isomaltosaccharides. This chain is Glucan 1,6-alpha-glucosidase (dexB), found in Streptococcus pneumoniae serotype 4 (strain ATCC BAA-334 / TIGR4).